The chain runs to 211 residues: Small ribosomal subunit protein uS3 (211 aa).

The 70-residue stretch at 16 to 85 (IDEYFKGKLV…NPQIEVKPLE (70 aa)) folds into the KH type-2 domain.

Belongs to the universal ribosomal protein uS3 family. In terms of assembly, part of the 30S ribosomal subunit.

In terms of biological role, binds the lower part of the 30S subunit head. In Methanococcus vannielii (strain ATCC 35089 / DSM 1224 / JCM 13029 / OCM 148 / SB), this protein is Small ribosomal subunit protein uS3.